The following is a 66-amino-acid chain: Large ribosomal subunit protein bL33c (66 aa).

Belongs to the bacterial ribosomal protein bL33 family.

Its subcellular location is the plastid. It is found in the chloroplast. This chain is Large ribosomal subunit protein bL33c, found in Physcomitrium patens (Spreading-leaved earth moss).